Here is a 310-residue protein sequence, read N- to C-terminus: ADP-L-glycero-D-manno-heptose-6-epimerase (310 aa).

NADP(+) is bound by residues 10 to 11 (FI), 31 to 32 (DN), Lys38, Lys53, 75 to 79 (EGACS), and Asn92. Tyr140 serves as the catalytic Proton acceptor. Lys144 is a binding site for NADP(+). Asn169 contacts substrate. The NADP(+) site is built by Val170 and Lys178. Catalysis depends on Lys178, which acts as the Proton acceptor. Substrate contacts are provided by residues Ser180, His187, 201-204 (FEGS), Arg209, and Tyr272.

It belongs to the NAD(P)-dependent epimerase/dehydratase family. HldD subfamily. Homopentamer. The cofactor is NADP(+).

The enzyme catalyses ADP-D-glycero-beta-D-manno-heptose = ADP-L-glycero-beta-D-manno-heptose. It participates in nucleotide-sugar biosynthesis; ADP-L-glycero-beta-D-manno-heptose biosynthesis; ADP-L-glycero-beta-D-manno-heptose from D-glycero-beta-D-manno-heptose 7-phosphate: step 4/4. In terms of biological role, catalyzes the interconversion between ADP-D-glycero-beta-D-manno-heptose and ADP-L-glycero-beta-D-manno-heptose via an epimerization at carbon 6 of the heptose. This chain is ADP-L-glycero-D-manno-heptose-6-epimerase, found in Salmonella arizonae (strain ATCC BAA-731 / CDC346-86 / RSK2980).